Reading from the N-terminus, the 394-residue chain is Acetyl-CoA acetyltransferase (394 aa).

Cys-89 (acyl-thioester intermediate) is an active-site residue. Catalysis depends on proton acceptor residues His-350 and Cys-380.

Belongs to the thiolase-like superfamily. Thiolase family. Homotetramer.

It is found in the cytoplasm. It carries out the reaction 2 acetyl-CoA = acetoacetyl-CoA + CoA. It participates in biopolymer metabolism; poly-(R)-3-hydroxybutanoate biosynthesis. Its pathway is metabolic intermediate biosynthesis; (R)-mevalonate biosynthesis; (R)-mevalonate from acetyl-CoA: step 1/3. This Thiocystis violacea protein is Acetyl-CoA acetyltransferase.